A 271-amino-acid chain; its full sequence is MYYAVSQARVNAVPGTMLRPQRPGDLQLGASLYELVGYRQPPSSSSSSTSSTSSTSSSSTTAPLLPKAAREKPEAPAEPPGPGPGSGAHPGGSARPDAKEEQQQQLRRKINSRERKRMQDLNLAMDALREVILPYSAAHCQGAPGRKLSKIATLLLARNYILLLGSSLQELRRALGEGAGPAAPRLLLAGLPLLAAAPGSVLLAPGAVGPPDALRPAKYLSLALDEPPCGQFALPGGGAGGPGLCTCAVCKFPHLVPASLGLAAVQAQFSK.

Residues 38 to 117 form a disordered region; it reads YRQPPSSSSS…RKINSRERKR (80 aa). Low complexity predominate over residues 43–61; that stretch reads SSSSSSTSSTSSTSSSSTT. The region spanning 105 to 164 is the bHLH domain; that stretch reads QLRRKINSRERKRMQDLNLAMDALREVILPYSAAHCQGAPGRKLSKIATLLLARNYILLL.

In terms of tissue distribution, expressed in the brain, in oligodendrocytes. Strongly expressed in oligodendrogliomas, while expression is weak to moderate in astrocytomas. Expression in glioblastomas is highly variable.

Its subcellular location is the nucleus. Promotes formation and maturation of oligodendrocytes, especially within the brain. Cooperates with OLIG2 to establish the pMN domain of the embryonic neural tube. In Homo sapiens (Human), this protein is Oligodendrocyte transcription factor 1 (OLIG1).